The following is a 666-amino-acid chain: ATP-dependent RNA helicase MSS116, mitochondrial (666 aa).

The transit peptide at 1–22 (MLRHCSLGLVTTQISAIAPLRL) directs the protein to the mitochondrion. Residues 38-60 (RDRRSSRSREDKPYNSRTRRFDD) show a composition bias toward basic and acidic residues. Residues 38-131 (RDRRSSRSRE…KSYSKGGNTS (94 aa)) are disordered. Polar residues predominate over residues 120–131 (NTKSYSKGGNTS). The Q motif signature appears at 159–187 (SLLEKNVISRDLYDSISRMGFEQLTPVQQ). Residues 192 to 379 (PIITNSDSDI…NDIMNKEECL (188 aa)) form the Helicase ATP-binding domain. 205 to 212 (AKTGTGKT) lines the ATP pocket. Positions 320–323 (DEAD) match the DEAD box motif. One can recognise a Helicase C-terminal domain in the interval 408 to 560 (NLYAAIEHIR…NIRKFEAQPH (153 aa)).

The protein belongs to the DEAD box helicase family. DDX18/HAS1 subfamily.

Its subcellular location is the mitochondrion matrix. The enzyme catalyses ATP + H2O = ADP + phosphate + H(+). Functionally, ATP-dependent RNA helicase required for mitochondrial splicing of group I and II introns. Also required for efficient mitochondrial translation. The sequence is that of ATP-dependent RNA helicase MSS116, mitochondrial (MSS116) from Candida glabrata (strain ATCC 2001 / BCRC 20586 / JCM 3761 / NBRC 0622 / NRRL Y-65 / CBS 138) (Yeast).